The sequence spans 173 residues: Alpha-crystallin A chain (173 aa).

Methionine 1 carries the post-translational modification N-acetylmethionine. The interval 1–63 is required for complex formation with BFSP1 and BFSP2; the sequence is MDVTIQHPWF…RTVLDSGISE (63 aa). Glutamine 6 bears the Deamidated glutamine; partial mark. Serine 45 carries the phosphoserine modification. Glutamine 50 carries the post-translational modification Deamidated glutamine; partial. The sHSP domain occupies 52–162; sequence LFRTVLDSGI…GHSERAIPVS (111 aa). Lysine 70 bears the N6-acetyllysine mark. A Deamidated glutamine; partial modification is found at glutamine 90. Lysine 99 carries the post-translational modification N6-acetyllysine. Zn(2+) contacts are provided by histidine 100, glutamate 102, and histidine 107. A Phosphoserine modification is found at serine 122. At asparagine 123 the chain carries Deamidated asparagine; partial. Residues 145 to 173 form a disordered region; it reads KVQSGLDAGHSERAIPVSREEKPSSAPSS. Position 147 is a deamidated glutamine; partial (glutamine 147). The segment covering 153 to 167 has biased composition (basic and acidic residues); sequence GHSERAIPVSREEKP. A Zn(2+)-binding site is contributed by histidine 154. Serine 162 is a glycosylation site (O-linked (GlcNAc) serine).

This sequence belongs to the small heat shock protein (HSP20) family. In terms of assembly, heteromer composed of three CRYAA and one CRYAB subunits. Inter-subunit bridging via zinc ions enhances stability, which is crucial as there is no protein turn over in the lens. Can also form homodimers and homotetramers (dimers of dimers) which serve as the building blocks of homooligomers. Within homooligomers, the zinc-binding motif is created from residues of 3 different molecules. His-100 and Glu-102 from one molecule are ligands of the zinc ion, and His-107 and His-154 residues from additional molecules complete the site with tetrahedral coordination geometry. Part of a complex required for lens intermediate filament formation composed of BFSP1, BFSP2 and CRYAA. Post-translationally, acetylation at Lys-70 may increase chaperone activity. In terms of processing, undergoes age-dependent proteolytical cleavage at the C-terminus.

It is found in the cytoplasm. The protein resides in the nucleus. Contributes to the transparency and refractive index of the lens. Acts as a chaperone, preventing aggregation of various proteins under a wide range of stress conditions. Required for the correct formation of lens intermediate filaments as part of a complex composed of BFSP1, BFSP2 and CRYAA. This is Alpha-crystallin A chain (CRYAA) from Ochotona princeps (Southern American pika).